Consider the following 220-residue polypeptide: 5'(3')-deoxyribonucleotidase, mitochondrial (220 aa).

The N-terminal 23 residues, 1-23 (MHRLRGCCARPRGAPLRAERSRA), are a transit peptide targeting the mitochondrion. The active-site Nucleophile is the Asp33. Mg(2+)-binding residues include Asp33 and Asp35. Asp35 acts as the Proton donor in catalysis. Residues Asp35, Phe41, Phe67, Trp68, Val69, Trp88, Thr122, and Lys157 each contribute to the substrate site. Position 168 (Asp168) interacts with Mg(2+).

The protein belongs to the 5'(3')-deoxyribonucleotidase family. As to quaternary structure, homodimer. The cofactor is Mg(2+).

It is found in the mitochondrion. Functionally, dephosphorylates specifically the 5' and 2'(3')-phosphates of uracil and thymine deoxyribonucleotides, and so protects mitochondrial DNA replication from excess dTTP. Has only marginal activity towards dIMP and dGMP. The chain is 5'(3')-deoxyribonucleotidase, mitochondrial (Nt5m) from Mus musculus (Mouse).